Here is a 1770-residue protein sequence, read N- to C-terminus: Transposon Ty2-LR1 Gag-Pol polyprotein (1770 aa).

3 stretches are compositionally biased toward polar residues: residues 1 to 11 (MESQQLHQNPH), 19 to 39 (ASVTSKEVPSNQDPLAVSASN), and 49 to 60 (KVNSQQETTPGT). Disordered regions lie at residues 1–86 (MESQ…GQYQ) and 359–453 (QHSE…LPDH). The RNA-binding stretch occupies residues 295–397 (ENNINVSDRL…SSKPRAAKAH (103 aa)). Residues 369–381 (TSPNTTNTKVTTR) are compositionally biased toward low complexity. Polar residues-rich tracts occupy residues 399 to 408 (IATSSKFSRV) and 415 to 435 (ESTVSSQYLSDDNELSLGQQQ). The active-site For protease activity; shared with dimeric partner is D457. Positions 579 to 636 (NVNKSKSVNKYPYPLIHRMLGHANFRSIQKSLKKNAVTYLKESDIEWSNASTYQCPDC) are integrase-type zinc finger-like. An Integrase catalytic domain is found at 656 to 831 (ESYEPFQYLH…AGLDITTILP (176 aa)). Mg(2+)-binding residues include D667 and D732. Disordered regions lie at residues 1005-1038 (GGTIESDTTSPRHSSTFTARNQKRPGSPNDMIDL), 1058-1135 (GTEE…KSSK), 1146-1165 (LPLPDLTHKSPTDTSDVSKD), and 1170-1205 (HSRQTNSSLGGMDDSNVLTTTKSKKRSLEDNETEIE). Polar residues-rich tracts occupy residues 1009 to 1024 (ESDTTSPRHSSTFTAR) and 1065 to 1082 (QRNSDTNIKYRTTNSTPS). The span at 1151–1165 (LTHKSPTDTSDVSKD) shows a compositional bias: basic and acidic residues. The Bipartite nuclear localization signal motif lies at 1193-1227 (KKRSLEDNETEIEVSRDTWNNKNMRSLEPPRSKKR). The region spanning 1353-1491 (NDYYITQLDI…DILGLEIKYQ (139 aa)) is the Reverse transcriptase Ty1/copia-type domain. The Mg(2+) site is built by D1361, D1442, D1443, D1625, E1667, and D1700. The RNase H Ty1/copia-type domain maps to 1625 to 1767 (DASYGNQPYY…IKTFKLLTNK (143 aa)).

As to quaternary structure, the capsid protein forms a homotrimer, from which the VLPs are assembled. The protease is a homodimer, whose active site consists of two apposed aspartic acid residues. Initially, virus-like particles (VLPs) are composed of the structural unprocessed proteins Gag and Gag-Pol, and also contain the host initiator methionine tRNA (tRNA(i)-Met) which serves as a primer for minus-strand DNA synthesis, and a dimer of genomic Ty RNA. Processing of the polyproteins occurs within the particle and proceeds by an ordered pathway, called maturation. First, the protease (PR) is released by autocatalytic cleavage of the Gag-Pol polyprotein, and this cleavage is a prerequisite for subsequent processing at the remaining sites to release the mature structural and catalytic proteins. Maturation takes place prior to the RT reaction and is required to produce transposition-competent VLPs.

The protein localises to the cytoplasm. It localises to the nucleus. The catalysed reaction is DNA(n) + a 2'-deoxyribonucleoside 5'-triphosphate = DNA(n+1) + diphosphate. The enzyme catalyses Endonucleolytic cleavage to 5'-phosphomonoester.. In terms of biological role, capsid protein (CA) is the structural component of the virus-like particle (VLP), forming the shell that encapsulates the retrotransposons dimeric RNA genome. The particles are assembled from trimer-clustered units and there are holes in the capsid shells that allow for the diffusion of macromolecules. CA also has nucleocapsid-like chaperone activity, promoting primer tRNA(i)-Met annealing to the multipartite primer-binding site (PBS), dimerization of Ty2 RNA and initiation of reverse transcription. Its function is as follows. The aspartyl protease (PR) mediates the proteolytic cleavages of the Gag and Gag-Pol polyproteins after assembly of the VLP. Functionally, reverse transcriptase/ribonuclease H (RT) is a multifunctional enzyme that catalyzes the conversion of the retro-elements RNA genome into dsDNA within the VLP. The enzyme displays a DNA polymerase activity that can copy either DNA or RNA templates, and a ribonuclease H (RNase H) activity that cleaves the RNA strand of RNA-DNA heteroduplexes during plus-strand synthesis and hydrolyzes RNA primers. The conversion leads to a linear dsDNA copy of the retrotransposon that includes long terminal repeats (LTRs) at both ends. Integrase (IN) targets the VLP to the nucleus, where a subparticle preintegration complex (PIC) containing at least integrase and the newly synthesized dsDNA copy of the retrotransposon must transit the nuclear membrane. Once in the nucleus, integrase performs the integration of the dsDNA into the host genome. This is Transposon Ty2-LR1 Gag-Pol polyprotein (TY2B-LR1) from Saccharomyces cerevisiae (strain ATCC 204508 / S288c) (Baker's yeast).